The following is a 214-amino-acid chain: Putative archaetidylserine decarboxylase proenzyme (214 aa).

Serine 180 (schiff-base intermediate with substrate; via pyruvic acid) is an active-site residue. Position 180 is a pyruvic acid (Ser); by autocatalysis (serine 180).

This sequence belongs to the phosphatidylserine decarboxylase family. PSD-A subfamily. As to quaternary structure, heterodimer of a large membrane-associated beta subunit and a small pyruvoyl-containing alpha subunit. It depends on pyruvate as a cofactor. In terms of processing, is synthesized initially as an inactive proenzyme. Formation of the active enzyme involves a self-maturation process in which the active site pyruvoyl group is generated from an internal serine residue via an autocatalytic post-translational modification. Two non-identical subunits are generated from the proenzyme in this reaction, and the pyruvate is formed at the N-terminus of the alpha chain, which is derived from the carboxyl end of the proenzyme. The post-translation cleavage follows an unusual pathway, termed non-hydrolytic serinolysis, in which the side chain hydroxyl group of the serine supplies its oxygen atom to form the C-terminus of the beta chain, while the remainder of the serine residue undergoes an oxidative deamination to produce ammonia and the pyruvoyl prosthetic group on the alpha chain.

The protein resides in the cell membrane. It carries out the reaction archaetidylserine + H(+) = archaetidylethanolamine + CO2. Functionally, catalyzes the formation of archaetidylethanolamine (PtdEtn) from archaetidylserine (PtdSer). This Methanopyrus kandleri (strain AV19 / DSM 6324 / JCM 9639 / NBRC 100938) protein is Putative archaetidylserine decarboxylase proenzyme.